Consider the following 251-residue polypeptide: Capsid protein (251 aa).

The short motif at 3–20 is the Bipartite nuclear localization signal element; the sequence is KRDAPWRSMAGTSKVSRN. Residues 35-49 carry the Nuclear localization signal motif; it reads KAAAWVNRPMYRKPR. Residues 63–80 fold into a zinc finger; the sequence is CEGPCKVQSYEQRHDISH. The Nuclear export signal signature appears at 96 to 117; it reads ITHRVGKRFCVKSVYILGKIWM. Positions 195–242 match the Bipartite nuclear localization signal motif; sequence KRFWKVNNYVVYNHQEAGKYENHTENALLLYMACTHASNPVYATLKIR.

It belongs to the geminiviridae capsid protein family. In terms of assembly, homomultimer. Binds to single-stranded and double-stranded viral DNA. Interacts (via nuclear localization signals) with host importin alpha-1a.

The protein localises to the virion. Its subcellular location is the host nucleus. In terms of biological role, encapsidates the viral DNA into characteristic twinned ('geminate') particles. Binds the genomic viral ssDNA and shuttles it into and out of the cell nucleus. The CP of bipartite geminiviruses is not required for cell-to-cell or systemic movement. The sequence is that of Capsid protein from Cabbage leaf curl virus (isolate Jamaica) (CaLCuV).